Consider the following 867-residue polypeptide: Inactive tyrosine-protein kinase kin-32 (867 aa).

Residues G3 to D327 enclose the FERM domain. The 265-residue stretch at I367–I631 folds into the Protein kinase domain. ATP contacts are provided by residues I373–V381 and K400. The stretch at T662–D691 forms a coiled coil. The segment at A674–D729 is disordered. Acidic residues predominate over residues Q683–I694. Residues P698–S724 are compositionally biased toward polar residues.

This sequence belongs to the protein kinase superfamily. Tyr protein kinase family. FAK subfamily. In terms of tissue distribution, expressed in body wall muscles and some neurons in the head.

Has apparently no tyrosine kinase activity in vitro when expressed in mammalian cells. The polypeptide is Inactive tyrosine-protein kinase kin-32 (Caenorhabditis elegans).